Reading from the N-terminus, the 90-residue chain is Acylphosphatase (90 aa).

The Acylphosphatase-like domain occupies 3-90 (RVLIKLTGKV…DIYLDFSIVR (88 aa)). Active-site residues include R18 and N36.

Belongs to the acylphosphatase family.

The enzyme catalyses an acyl phosphate + H2O = a carboxylate + phosphate + H(+). The chain is Acylphosphatase (acyP) from Shewanella oneidensis (strain ATCC 700550 / JCM 31522 / CIP 106686 / LMG 19005 / NCIMB 14063 / MR-1).